We begin with the raw amino-acid sequence, 171 residues long: S-ribosylhomocysteine lyase (171 aa).

The Fe cation site is built by His-54, His-58, and Cys-128.

This sequence belongs to the LuxS family. Homodimer. The cofactor is Fe cation.

The catalysed reaction is S-(5-deoxy-D-ribos-5-yl)-L-homocysteine = (S)-4,5-dihydroxypentane-2,3-dione + L-homocysteine. Functionally, involved in the synthesis of autoinducer 2 (AI-2) which is secreted by bacteria and is used to communicate both the cell density and the metabolic potential of the environment. The regulation of gene expression in response to changes in cell density is called quorum sensing. Catalyzes the transformation of S-ribosylhomocysteine (RHC) to homocysteine (HC) and 4,5-dihydroxy-2,3-pentadione (DPD). The sequence is that of S-ribosylhomocysteine lyase from Salmonella agona (strain SL483).